Here is a 306-residue protein sequence, read N- to C-terminus: Lipoyl synthase 2 (306 aa).

Residues Cys-49, Cys-54, Cys-60, Cys-75, Cys-79, Cys-82, and Ser-300 each coordinate [4Fe-4S] cluster. In terms of domain architecture, Radical SAM core spans 61–289; that stretch reads YAAGTATFLL…AEVACKLGFA (229 aa).

It belongs to the radical SAM superfamily. Lipoyl synthase family. [4Fe-4S] cluster is required as a cofactor.

It localises to the cytoplasm. It carries out the reaction [[Fe-S] cluster scaffold protein carrying a second [4Fe-4S](2+) cluster] + N(6)-octanoyl-L-lysyl-[protein] + 2 oxidized [2Fe-2S]-[ferredoxin] + 2 S-adenosyl-L-methionine + 4 H(+) = [[Fe-S] cluster scaffold protein] + N(6)-[(R)-dihydrolipoyl]-L-lysyl-[protein] + 4 Fe(3+) + 2 hydrogen sulfide + 2 5'-deoxyadenosine + 2 L-methionine + 2 reduced [2Fe-2S]-[ferredoxin]. It functions in the pathway protein modification; protein lipoylation via endogenous pathway; protein N(6)-(lipoyl)lysine from octanoyl-[acyl-carrier-protein]: step 2/2. Its function is as follows. Catalyzes the radical-mediated insertion of two sulfur atoms into the C-6 and C-8 positions of the octanoyl moiety bound to the lipoyl domains of lipoate-dependent enzymes, thereby converting the octanoylated domains into lipoylated derivatives. This is Lipoyl synthase 2 from Prochlorococcus marinus (strain MIT 9313).